We begin with the raw amino-acid sequence, 334 residues long: Formamidase (334 aa).

The region spanning 14–260 (MLMGLVQYPV…WEIVTAEVFP (247 aa)) is the CN hydrolase domain. Glu-60 serves as the catalytic Proton acceptor. The active-site Proton donor is the Lys-133. The active-site Nucleophile is Cys-166.

This sequence belongs to the carbon-nitrogen hydrolase superfamily. Aliphatic amidase family.

The catalysed reaction is formamide + H2O = formate + NH4(+). Functionally, is an aliphatic amidase with a restricted substrate specificity, as it only hydrolyzes formamide. The chain is Formamidase from Nitratidesulfovibrio vulgaris (strain DP4) (Desulfovibrio vulgaris).